We begin with the raw amino-acid sequence, 672 residues long: Protein OS-9 (672 aa).

Positions 1–26 (MAAEVLLSSLLGLLFLGLLLPARLTG) are cleaved as a signal peptide. One can recognise an MRH domain in the interval 108 to 230 (APCLLKTKDW…TIRTSRLCPH (123 aa)). The cysteines at positions 110 and 123 are disulfide-linked. A mannooligosaccharide derivative contacts are provided by tryptophan 117, tryptophan 118, and glutamine 130. N-linked (GlcNAc...) asparagine glycosylation occurs at asparagine 177. Intrachain disulfides connect cysteine 181-cysteine 216 and cysteine 196-cysteine 228. Residues aspartate 182, arginine 188, glutamate 212, and tyrosine 218 each contribute to the a mannooligosaccharide derivative site. 4 disordered regions span residues 261–355 (RQAE…NVQV), 372–452 (KAAE…LLPS), 511–548 (ENQS…RVRV), and 637–672 (EANK…EFDF). 5 stretches are compositionally biased toward basic and acidic residues: residues 263–281 (AESK…DTDR), 294–310 (PKKE…ESEL), 320–338 (AAAR…HEAA), 372–386 (KAAE…REQP), and 394–409 (PQRE…KDGE). A compositionally biased stretch (acidic residues) spans 414–435 (MEEEDGDDEEEEEEEEEDEEEQ). A compositionally biased stretch (basic and acidic residues) spans 637–652 (EANKERQRQSELESNY). Residues 663 to 672 (DTGDLDEFDF) are compositionally biased toward acidic residues.

The protein belongs to the OS-9 family. As to quaternary structure, component of the HRD1 complex, which comprises at least SYNV1/HRD1, DERL1/2, FAM8A1, HERPUD1/HERP, OS9, SEL1L and UBE2J1. FAM8A1 is stabilized by interaction with SYNV1, which prevents its proteasomal degradation. OS9 and UBE2J1 recruitment to the complex may be mediated by SEL1L. Through this complex, may interact with ERLEC1 and HSPA5. Interacts (via C-terminus) with CPNE6 (via second C2 domain); this interaction occurs in a calcium-dependent manner in vitro. Interacts with CREB3. N-glycosylated. In terms of processing, intramolecular disulfide bonds.

The protein localises to the endoplasmic reticulum lumen. In terms of biological role, lectin component of the HRD1 complex, which functions in endoplasmic reticulum (ER) quality control and ER-associated degradation (ERAD). Specifically recognizes and binds improperly folded glycoproteins as well as hyperglycosylated proteins, retain them in the ER, and transfers them to the ubiquitination machinery and promote their degradation. Possible targets include TRPV4 as well as hyperglycosylated HSP90B1. In Mus musculus (Mouse), this protein is Protein OS-9 (Os9).